Reading from the N-terminus, the 341-residue chain is Glyceraldehyde-3-phosphate dehydrogenase (341 aa).

NAD(+)-binding positions include 11–12 and glycine 109; that span reads TI. A D-glyceraldehyde 3-phosphate-binding site is contributed by 138–140; that stretch reads SCN. Cysteine 139 functions as the Nucleophile in the catalytic mechanism. Residue arginine 167 coordinates NAD(+). D-glyceraldehyde 3-phosphate contacts are provided by residues threonine 169 and 192 to 193; that span reads HA. Glutamine 299 is a binding site for NAD(+).

This sequence belongs to the glyceraldehyde-3-phosphate dehydrogenase family. Homotetramer.

The protein localises to the cytoplasm. The catalysed reaction is D-glyceraldehyde 3-phosphate + phosphate + NADP(+) = (2R)-3-phospho-glyceroyl phosphate + NADPH + H(+). It catalyses the reaction D-glyceraldehyde 3-phosphate + phosphate + NAD(+) = (2R)-3-phospho-glyceroyl phosphate + NADH + H(+). It participates in carbohydrate degradation; glycolysis; pyruvate from D-glyceraldehyde 3-phosphate: step 1/5. This is Glyceraldehyde-3-phosphate dehydrogenase from Picrophilus torridus (strain ATCC 700027 / DSM 9790 / JCM 10055 / NBRC 100828 / KAW 2/3).